Reading from the N-terminus, the 484-residue chain is Tubulin-like protein TubZ (484 aa).

32 to 33 (QK) lines the GTP pocket. Residue aspartate 64 participates in Mg(2+) binding. GTP-binding positions include 140 to 142 (GVG), asparagine 213, lysine 237, and asparagine 241. Positions 408 to 484 (RKQDEEKVDI…LKTSNPFKKR (77 aa)) are required to bind TubR-DNA complex. Residues 428-484 (TFNPYNKNQGFGGASRFSGGKNSAFKRQTSEATSTQNQQEEENIISTLKTSNPFKKR) are disordered. Residues 452-484 (FKRQTSEATSTQNQQEEENIISTLKTSNPFKKR) are compositionally biased toward polar residues.

Belongs to the FtsZ family. TubZ subfamily. In terms of assembly, forms filaments; a 2-stranded filament forms with the non-hydrolyzable GTP-gamma-S which is probably a precursor to the 4-stranded filament that forms in the presence of GTP. The 4-stranded form binds GDP. In vivo polymerizes to form dynamic filaments that often extend from one cell pole to the other, moving in a unidirectional manner. Filaments polymerize at the plus end and depolymerize at the minus end, a process called treadmilling. Polymerization only occurs above a critical concentration, it does not require upstream tubR. The tubC DNA-TubR complex binds to TubZ. Mg(2+) is required as a cofactor.

The protein resides in the cytoplasm. It catalyses the reaction GTP + H2O = GDP + phosphate + H(+). Its activity is regulated as follows. GTPase is inhibited by GTP-gamma-S, which also stabilizes filaments. A tubulin-like, filament forming GTPase; the motor component of the type III plasmid partition system which ensures correct segregation of the pBtoxis plasmid. Filaments may seed from the centromere-like site (tubC) when bound by DNA-binding protein TubR; the tubC-TubR complex stabilizes the TubZ filament. Filaments grow at the plus end and depolymerize at the minus end, a process called treadmilling. TubR-tubC complexes track the depolymerizing minus end of the filament, probably pulling plasmid within the cell. Required for pBtoxis plasmid replication/partition. Binds the TubR-tubC complex; GTP is not required for binding to TubR-tubC. TubZ alone does not bind DNA. Has a high GTPase activity in the presence of Mg(2+); in the presence of GTP assembles into dynamic filaments which upon polymerization bind almost exclusively GDP. Filament formation is cooperative, requiring a critical concentration. Formation occurs very quickly and is followed by disassembly as GTP is consumed. The protein is Tubulin-like protein TubZ of Bacillus thuringiensis subsp. israelensis.